The primary structure comprises 317 residues: tRNA(Ile)-lysidine synthase (317 aa).

ATP is bound at residue 32-37; the sequence is SGGVDS.

The protein belongs to the tRNA(Ile)-lysidine synthase family.

It localises to the cytoplasm. The catalysed reaction is cytidine(34) in tRNA(Ile2) + L-lysine + ATP = lysidine(34) in tRNA(Ile2) + AMP + diphosphate + H(+). In terms of biological role, ligates lysine onto the cytidine present at position 34 of the AUA codon-specific tRNA(Ile) that contains the anticodon CAU, in an ATP-dependent manner. Cytidine is converted to lysidine, thus changing the amino acid specificity of the tRNA from methionine to isoleucine. The sequence is that of tRNA(Ile)-lysidine synthase from Aquifex aeolicus (strain VF5).